A 272-amino-acid polypeptide reads, in one-letter code: ATP synthase subunit a (272 aa).

The next 5 membrane-spanning stretches (helical) occupy residues 41-61 (VLNI…LLIF), 101-121 (LIAP…LMDL), 143-165 (VPSA…ILYY), 221-241 (LIFI…LNVP), and 243-263 (AIFH…LTIV).

This sequence belongs to the ATPase A chain family. F-type ATPases have 2 components, CF(1) - the catalytic core - and CF(0) - the membrane proton channel. CF(1) has five subunits: alpha(3), beta(3), gamma(1), delta(1), epsilon(1). CF(0) has three main subunits: a(1), b(2) and c(9-12). The alpha and beta chains form an alternating ring which encloses part of the gamma chain. CF(1) is attached to CF(0) by a central stalk formed by the gamma and epsilon chains, while a peripheral stalk is formed by the delta and b chains.

The protein localises to the cell inner membrane. Its function is as follows. Key component of the proton channel; it plays a direct role in the translocation of protons across the membrane. The chain is ATP synthase subunit a from Sodalis glossinidius (strain morsitans).